Consider the following 82-residue polypeptide: Putative membrane protein insertion efficiency factor (82 aa).

A disordered region spans residues 63-82 (GGFDPVPLKKDKNSKTTHHH).

It belongs to the UPF0161 family.

The protein resides in the cell membrane. In terms of biological role, could be involved in insertion of integral membrane proteins into the membrane. This is Putative membrane protein insertion efficiency factor from Staphylococcus epidermidis (strain ATCC 35984 / DSM 28319 / BCRC 17069 / CCUG 31568 / BM 3577 / RP62A).